The primary structure comprises 64 residues: uncharacterized protein (64 aa).

This is an uncharacterized protein from Methanothermobacter thermautotrophicus (strain ATCC 29096 / DSM 1053 / JCM 10044 / NBRC 100330 / Delta H) (Methanobacterium thermoautotrophicum).